We begin with the raw amino-acid sequence, 203 residues long: Tail fiber assembly protein homolog (203 aa).

The protein belongs to the tfa family.

The chain is Tail fiber assembly protein homolog (T) from Escherichia coli.